A 399-amino-acid chain; its full sequence is PCI domain-containing protein 2 (399 aa).

N-acetylalanine is present on Ala2. Ser45 carries the phosphoserine modification. In terms of domain architecture, PCI spans 210-391; that stretch reads ITYKYYVGRK…QKLVVSKQNP (182 aa).

The protein belongs to the CSN12 family. In terms of assembly, component of the nuclear pore complex (NPC)-associated TREX-2 complex (transcription and export complex 2), composed of at least GANP, 2 copies of ENY2, PCID2, SEM1/DSS1, and either centrin CETN2 or centrin CETN3. The TREX-2 complex also associates with ALYREF/ALY and with the nucleoporin NUP153. Interacts with BRCA2. Interacts with SRCAP chromatin remodeling complex component ZNHIT1; the interaction results in inhibition of SRCAP complex activity, preventing the deposition of histone variant H2AZ1/H2A.Z to lymphoid fate regulator genes and restricting lymphoid lineage commitment. In terms of tissue distribution, highly expressed in bone marrow and haematopoietic progenitor cells but is almost undetectable in mature blood cells.

The protein localises to the cytoplasm. Its subcellular location is the nucleus. It localises to the nuclear pore complex. In terms of biological role, required for B-cell survival through the regulation of the expression of cell-cycle checkpoint MAD2L1 protein during B cell differentiation. As a component of the TREX-2 complex, involved in the export of mRNAs to the cytoplasm through the nuclear pores. Binds and stabilizes BRCA2 and is thus involved in the control of R-loop-associated DNA damage and transcription-associated genomic instability. Blocks the activity of the SRCAP chromatin remodeling complex by interacting with SRCAP complex member ZNHIT1 and inhibiting its interaction with the complex. This prevents the deposition of histone variant H2AZ1/H2A.Z at the nucleosomes of key lymphoid fate regulator genes which suppresses their expression and restricts lymphoid lineage commitment. The polypeptide is PCI domain-containing protein 2 (Pcid2) (Mus musculus (Mouse)).